The following is a 58-amino-acid chain: Succinate dehydrogenase subunit 8B, mitochondrial (58 aa).

Component of complex II composed of eight subunits in plants: four classical SDH subunits SDH1, SDH2, SDH3 and SDH4 (a flavoprotein (FP), an iron-sulfur protein (IP), and a cytochrome b composed of a large and a small subunit.), as well as four subunits unknown in mitochondria from bacteria and heterotrophic eukaryotes.

It localises to the mitochondrion inner membrane. The protein operates within carbohydrate metabolism; tricarboxylic acid cycle. This Oryza sativa subsp. japonica (Rice) protein is Succinate dehydrogenase subunit 8B, mitochondrial.